The following is a 133-amino-acid chain: UPF0102 protein bll0669 (133 aa).

This sequence belongs to the UPF0102 family.

The chain is UPF0102 protein bll0669 from Bradyrhizobium diazoefficiens (strain JCM 10833 / BCRC 13528 / IAM 13628 / NBRC 14792 / USDA 110).